A 2364-amino-acid chain; its full sequence is MSLVNKAQLQKMAYVKFRIQEDEYVAILNALEEYHNMSESSVVEKYLKLKDINNLTDNYLNTYKKSGRNKALKKFKEYLTMEVLELKNNSLTPVEKNLHFIWIGGQINDTAINYINQWKDVNSDYTVKVFYDSNAFLINTLKKTIVESATNNTLESFRENLNDPEFDYNKFYRKRMEIIYDKQKHFIDYYKSQIEENPEFIIDNIIKTYLSNEYSKDLEALNKYIEESLNKITANNGNDIRNLEKFADEDLVRLYNQELVERWNLAAASDILRISMLKEDGGVYLDVDMLPGIQPDLFKSINKPDSITDTSWEMIKLEAIMKYKEYIPGYTSKNFDMLDEEVQSSFESALSSTSDKSEIFLPLDDIKVSPLEVKIAFANNSVINQALISLKDSYGSDLVISQIKNRYKILNDNLNPAINEGNDFNTTMKTFNDNLVSISNEDNIMFMIKIADYLKVGFAPDVRSTINLSGPGVYTGAYQDLLMFKDNSINIHLLEPELRNFEFPKTKISQLTEQEITSLWSFNQARAKSQFEEYKKGYFEGALGEDDILDFSQNTVLDKDYVVEKISSSMRTPNKEYVHYIVQLQGDNVSYEAACNLFAKNPYYNILFQKNIENSETAYYYNLIYNKLQEIDKYRIPNLISNRHKIKLTFIGHGKSEFNTDTFANLDVNSLSSEIETILNLAKEDISPKSIEINLLGCNMFSYNVNVEETYPGKLLLKIKDIVSKLMPSISQDSITVSANQYEVRINKEGRRELLDHSGKWINKEESIIKDISSKEYISFNPKENKIIVKSKNLHELSTLLQEIKNNSNSSDIDLEKKVMLTECEINVASNIDTQIVEERIEEAKNLTSDSINYIKNEFKLIESISDALYDLKHQNGLDDSHFISFEDISKTENGFRIRFINKETGNSIFIETEKEIFSEYAAHISKEISNIKDTIFDNVNGKLVKKVNLDAAHEVNTLNSAFFIQSLIEYNTTKESLSNLSVAMKVQVYAQLFSTGLNTITDASKVVELVSTALDETIDLLPTLSEGLPIIATIIDGVSLGAAIKELSETNDPLLRQEIEAKIGIMAVNLTAASTAIVTSALGIASGFSILLVPLAGISAGIPSLVNNELILQDKATKVIDYFKHISLAETEGAFTLLDDKIIMPQDDLVLSEIDFNNNSITLGKCEIWRTEGGSGHTFTDDIDHFFSSPSITYRKPWLSIYDVLNIKKEKIDFSKDLMVLPNAPNRVFSYEMGWTPGFRSLDNDGTKLLDRIRDHYEGQFYWRYFAFIADALITKLKPRYEDTNVRINLDGNTRSFIVPVITTEQIRKNLSYSFYGSGGSYSLSLSPYNMNIDLNLVENDTWVIDVDNVVKNITIESDEIQKGELIENILSKLNIEDNKIVLNNHTINFYGAINESNRFISLTFSILEDINIIIEIDLVSKSYKILLSGNCIKLIENSSDIQQKIDHIGFNGEHQKYIPYSYIDNETKYNGFIDYSKKEGLFTAEFSNESIIRNIYMPDSNNLFIYSSKDLKDIRIINKGDVKLLIGNYFKDNMKVSLSFTIEDTNTIKLNGVYLDENGVAQILKFMNNAKSALNTSNSLMNFLESINIKNIFYNNLDPNIKFILDTNFIISGSNSIGQFELICDKDKNIQPYFIKFKIKETSYTLYAGNRQNLIVEPSYHLDDSGNISSTVINFSQKYLYGIDRYVNKVIITPNLYTDEINITPVYKPNYICPEVIILDANYINEKINININDLSIRYVWDNDGSDLILIANSEEDNQPQVKIRFVNVFKSDTAADKLSFNFSDKQDVSVSKIISTFSLAAYSDGVFDYEFGLVSLDNECFYINSFGNMVSGLIYINDSLYYFKPPKNNLITGFTTIDDNKYYFDPTKSGAASIGEITIDGKDYYFNKQGILQVGVINTSDGLKYFAPAGTLDENLEGESVNFIGKLNIDGKIYYFEDNYRAAVEWKSLDGETYYFNPKTGEALKGLHQIGDNKYYFDNNGIMQTGFITINDKVFYFNNDGVMQVGYIEVNGKYFYFGKNGERQLGVFNTPDGFKFFGPKDDDLGTEEGELTLYNGILNFNGKIYFFDISNTAVVGWGILDDGSTYYFDDNTAEACIGLTVINDCKYYFDDNGIRQLGFITINDNIFYFSESGKIELGYQNINGNYFYIDESGLVLIGVFDTPDGYKYFAPLNTVNDNIYGQAVEYSGLVRLNEDVYYFGETYKIETGWIENETDKYYFDPETKKAYKGINVVDDIKYYFDENGIMKTGLISFENNNYYFNEDGKMQFGYLNIKDKMFYFGKDGKMQIGVFNTPDGFKYFAHQNTLDENFEGESINYTGWLDLDGKRYYFTDEYIAATSSLTIDGYNYYFDPDTAELVVSE.

The tract at residues 1–91 (MSLVNKAQLQ…EVLELKNNSL (91 aa)) is four-helical bundle. Positions 96 to 468 (KNLHFIWIGG…APDVRSTINL (373 aa)) constitute a GT44 domain. The glucosyltransferase region stretch occupies residues 96–468 (KNLHFIWIGG…APDVRSTINL (373 aa)). UDP-alpha-D-glucose-binding positions include 101–103 (IWI), Asn139, 265–270 (LAAASD), and 286–288 (DVD). 3 residues coordinate Mg(2+): Asp288, Glu515, and Ser518. 518-520 (SLW) provides a ligand contact to UDP-alpha-D-glucose. The tract at residues 544-799 (GEDDILDFSQ…KSKNLHELST (256 aa)) is autoprocessing region. Zn(2+) is bound by residues Glu545 and Asp546. The Peptidase C80 domain occupies 567 to 774 (SSSMRTPNKE…EESIIKDISS (208 aa)). Positions 577, 600, and 647 each coordinate 1D-myo-inositol hexakisphosphate. Zn(2+) is bound at residue His653. Residue His653 is the For protease activity of the active site. Cys698 serves as the catalytic Nucleophile; for protease activity. His757 contributes to the Zn(2+) binding site. Residues Lys764, Lys775, and Lys792 each contribute to the 1D-myo-inositol hexakisphosphate site. Positions 800–1500 (LLQEIKNNSN…ESIIRNIYMP (701 aa)) are translocation region. 5 interaction with host SEMA6A and SEMA6B regions span residues 1433 to 1438 (CIKLIE), 1466 to 1471 (DNETKY), 1484 to 1495 (FTAEFSNESIIR), 1504 to 1511 (NLFIYSSK), and 1596 to 1601 (YNNLDP). Cell wall-binding repeat units follow at residues 1833-1852 (VSGL…PKNN), 1854-1873 (ITGF…TKSG), 1876-1895 (SIGE…QGIL), 1926-1945 (FIGK…NYRA), 1946-1965 (AVEW…KTGE), 1967-1986 (LKGL…NGIM), 1987-2006 (QTGF…DGVM), 2007-2026 (QVGY…NGER), 2057-2076 (YNGI…SNTA), 2077-2097 (VVGW…NTAE), 2099-2118 (CIGL…NGIR), 2119-2138 (QLGF…SGKI), 2139-2158 (ELGY…SGLV), 2209-2224 (ETGW…YFDP), 2227-2249 (KKAY…NGIM), 2250-2269 (KTGL…DGKM), 2270-2289 (QFGY…DGKM), 2320-2339 (YTGW…EYIA), and 2340-2359 (ATSS…DTAE). Positions 1835 to 2364 (GLIYINDSLY…PDTAELVVSE (530 aa)) are receptor-binding (CROPS) region.

It belongs to the clostridial glucosylating toxin (LCGT) family. As to quaternary structure, homomultimer; forms an inactive homomultimer at pH 8, which dissociates at pH 4, leading to cytotoxicity. Interacts with host SEMA6A; interaction promotes toxin entry into host cell. Interacts with host SEMA6B; interaction promotes toxin entry into host cell. It depends on Zn(2+) as a cofactor. Mn(2+) is required as a cofactor. The cofactor is Mg(2+). In terms of processing, undergoes autocatalytic cleavage to release the N-terminal part (Glucosyltransferase TcsL), which constitutes the active part of the toxin, in the host cytosol. 1D-myo-inositol hexakisphosphate-binding (InsP6) activates the peptidase C80 domain and promotes autoprocessing.

It is found in the secreted. It localises to the host endosome membrane. The protein resides in the host cytoplasm. Its subcellular location is the host cytosol. The protein localises to the host cell membrane. It carries out the reaction L-threonyl-[protein] + UDP-alpha-D-glucose = 3-O-(alpha-D-glucosyl)-L-threonyl-[protein] + UDP + H(+). With respect to regulation, protease activity is activated upon binding to 1D-myo-inositol hexakisphosphate (InsP6), which induces conformational reorganization. Its function is as follows. Precursor of a cytotoxin that targets the vascular endothelium, inducing an anti-inflammatory effect and resulting in lethal toxic shock syndrome. TcsL constitutes the main toxin that mediates the pathology of P.sordellii infection, an anaerobic Gram-positive bacterium found in soil and in the gastrointestinal and vaginal tracts of animals and humans; although the majority of carriers are asymptomatic, pathogenic P.sordellii infections arise rapidly and are highly lethal. This form constitutes the precursor of the toxin: it enters into host cells and mediates autoprocessing to release the active toxin (Glucosyltransferase TcsL) into the host cytosol. Targets vascular endothelium by binding to the semaphorin proteins SEMA6A and SEMA6B, and enters host cells via clathrin-mediated endocytosis. Once entered into host cells, acidification in the endosome promotes the membrane insertion of the translocation region and formation of a pore, leading to translocation of the GT44 and peptidase C80 domains across the endosomal membrane. This activates the peptidase C80 domain and autocatalytic processing, releasing the N-terminal part (Glucosyltransferase TcsL), which constitutes the active part of the toxin, in the cytosol. In terms of biological role, active form of the toxin, which is released into the host cytosol following autoprocessing and inactivates small GTPases. Acts by mediating monoglucosylation of small GTPases of the Ras (H-Ras/HRAS, K-Ras/KRAS and N-Ras/NRAS) family in host cells at the conserved threonine residue located in the switch I region ('Thr-37/35'), using UDP-alpha-D-glucose as the sugar donor. Does not catalyze monoglucosylation of Ral/RALA. Also able to catalyze monoglucosylation of some members of the Rho family (Rac1 and Rap2A), but with less efficiency than with Ras proteins. Monoglucosylation of host small GTPases completely prevents the recognition of the downstream effector, blocking the GTPases in their inactive form and leading to apoptosis. Induces an anti-inflammatory effect, mainly by inactivating Ras proteins which results in blockage of the cell cycle and killing of immune cells. The absence or moderate local inflammatory response allows C.sordellii spreading in deep tissues, production of toxin which is released in the general circulation and causes a toxic shock syndrome. The protein is Cytotoxin-L of Paraclostridium sordellii (Clostridium sordellii).